A 122-amino-acid polypeptide reads, in one-letter code: U1 small nuclear ribonucleoprotein C (122 aa).

Residues 4–36 (YFCDYCDTYLTHDSPSVRKTHCSGRKHKDNVKM) form a Matrin-type zinc finger.

Belongs to the U1 small nuclear ribonucleoprotein C family. U1 snRNP is composed of the 7 core Sm proteins B/B', D1, D2, D3, E, F and G that assemble in a heptameric protein ring on the Sm site of the small nuclear RNA to form the core snRNP, and at least 3 U1 snRNP-specific proteins U1-70K, U1-A and U1-C. U1-C interacts with U1 snRNA and the 5' splice-site region of the pre-mRNA.

The protein resides in the nucleus. Component of the spliceosomal U1 snRNP, which is essential for recognition of the pre-mRNA 5' splice-site and the subsequent assembly of the spliceosome. U1-C is directly involved in initial 5' splice-site recognition for both constitutive and regulated alternative splicing. The interaction with the 5' splice-site seems to precede base-pairing between the pre-mRNA and the U1 snRNA. Stimulates commitment or early (E) complex formation by stabilizing the base pairing of the 5' end of the U1 snRNA and the 5' splice-site region. In Ciona intestinalis (Transparent sea squirt), this protein is U1 small nuclear ribonucleoprotein C.